The following is an 860-amino-acid chain: Protein argonaute-3 (860 aa).

Methionine 1 carries the post-translational modification N-acetylmethionine. The PAZ domain maps to 230–349; sequence PVIQFMCEVL…LPLEVCNIVA (120 aa). Positions 518–819 constitute a Piwi domain; that stretch reads LIIVILPGKT…VAFRARYHLV (302 aa). Positions 530-567 are interaction with guide RNA; that stretch reads YAEVKRVGDTLLGMATQCVQVKNVIKTSPQTLSNLCLK. The a divalent metal cation site is built by aspartate 598, glutamate 638, and aspartate 670. An interaction with guide RNA region spans residues 758 to 805; that stretch reads QGTSRPSHYHVLWDDNFFTADELQLLTYQLCHTYVRCTRSVSIPAPAY. Residue histidine 808 coordinates a divalent metal cation. A Phosphoserine modification is found at serine 825.

Belongs to the argonaute family. Ago subfamily. Interacts with EIF4B, IMP8, PRMT5 and TNRC6B. Interacts with APOBEC3F, APOBEC3G and APOBEC3H. Interacts with EDC4. In terms of processing, ubiquitinated on surface-exposed lysines by a SCF-like E3 ubiquitin-protein ligase complex containing ZSWIM8 during target-directed microRNA degradation (TDMD), a process that mediates degradation of microRNAs (miRNAs). Ubiquitination by the SCF-like E3 ubiquitin-protein ligase complex containing ZSWIM8 leads to its subsequent degradation, thereby exposing miRNAs for degradation. ZSWIM8 recognizes and binds AGO3 when it is engaged with a TDMD target.

It is found in the cytoplasm. The protein localises to the P-body. The catalysed reaction is Endonucleolytic cleavage to 5'-phosphomonoester.. Its function is as follows. Required for RNA-mediated gene silencing (RNAi). Binds to short RNAs such as microRNAs (miRNAs) and represses the translation of mRNAs which are complementary to them. Proposed to be involved in stabilization of small RNA derivates (siRNA) derived from processed RNA polymerase III-transcribed Alu repeats containing a DR2 retinoic acid response element (RARE) in stem cells and in the subsequent siRNA-dependent degradation of a subset of RNA polymerase II-transcribed coding mRNAs by recruiting a mRNA decapping complex involving EDC4. Possesses RNA slicer activity but only on select RNAs bearing 5'- and 3'-flanking sequences to the region of guide-target complementarity. The chain is Protein argonaute-3 (Ago3) from Mus musculus (Mouse).